Reading from the N-terminus, the 1136-residue chain is Mitochondrial 3' processome subunit 3 (1136 aa).

The transit peptide at M1 to D97 directs the protein to the mitochondrion.

In terms of assembly, component of the mitochondrial 3' processome (MPsome) complex composed at least of terminal uridylyltransferase KRET1/TUT1, 3'-5' exonuclease DSS1, MPSS1, MPSS2 and MPSS3. Within the complex, interacts with KRET1.

The protein localises to the mitochondrion. In terms of biological role, as part of the mitochondrial 3' processome (MPsome), involved in the maturation of guided RNA (gRNA) precursors. This is Mitochondrial 3' processome subunit 3 from Trypanosoma brucei brucei.